We begin with the raw amino-acid sequence, 164 residues long: Dehydrin Rab16C (164 aa).

The segment covering 42 to 51 has biased composition (gly residues); the sequence is MGGHHAGAGG. The tract at residues 42 to 164 is disordered; the sequence is MGGHHAGAGG…KIKEKLPGQH (123 aa). The span at 105-115 shows a compositional bias: low complexity; it reads GNNHQQQQMMG. Residues 128–138 show a composition bias toward gly residues; that stretch reads GMTGAGTGTGV. A compositionally biased stretch (basic and acidic residues) spans 147–164; that stretch reads GEKKGFMDKIKEKLPGQH.

The protein belongs to the plant dehydrin family.

The protein is Dehydrin Rab16C (RAB16C) of Oryza sativa subsp. indica (Rice).